A 281-amino-acid polypeptide reads, in one-letter code: 16S rRNA (guanine(1405)-N(7))-methyltransferase (281 aa).

S-adenosyl-L-methionine-binding positions include Tyr-60, 105-107 (HTS), Arg-111, Gly-136, Asp-160, 186-187 (QG), Phe-203, and Gln-212.

It belongs to the methyltransferase superfamily. Aminoglycoside resistance family.

The enzyme catalyses guanosine(1405) in 16S rRNA + S-adenosyl-L-methionine = N(7)-methylguanosine(1405) in 16S rRNA + S-adenosyl-L-homocysteine. In terms of biological role, specifically methylates the N(7) position of guanine 1405 in 16S rRNA. Confers resistance to various aminoglycosides, including gentamicin and kanamycin. This Proteus mirabilis protein is 16S rRNA (guanine(1405)-N(7))-methyltransferase (rmtC).